Consider the following 354-residue polypeptide: Green-sensitive opsin-3 (354 aa).

Topologically, residues 1–39 are extracellular; the sequence is MSGLNGFEGDNFYIPMSNRTGLVRDPFVYEQYYLAEPWQ. Residue asparagine 18 is glycosylated (N-linked (GlcNAc...) asparagine). A helical transmembrane segment spans residues 40 to 64; sequence FKLLACYMFFLICLGLPINGFTLFV. The Cytoplasmic portion of the chain corresponds to 65–76; sequence TAQHKKLQQPLN. Residues 77–102 form a helical membrane-spanning segment; the sequence is FILVNLAVAGMIMVCFGFTITISSAV. Over 103–116 the chain is Extracellular; the sequence is NGYFYFGPTACAIE. Cysteine 113 and cysteine 190 are disulfide-bonded. Residues 117–136 form a helical membrane-spanning segment; it reads GFMATLGGEVALWSLVVLAI. Residues 137–155 lie on the Cytoplasmic side of the membrane; the sequence is ERYIVVCKPMGSFKFSASH. The chain crosses the membrane as a helical span at residues 156–179; it reads ALGGIGFTWFMAMTCAAPPLVGWS. At 180-205 the chain is on the extracellular side; that stretch reads RYIPEGLQCSCGPDYYTLNPKYNNES. N-linked (GlcNAc...) asparagine glycosylation occurs at asparagine 203. The helical transmembrane segment at 206–233 threads the bilayer; that stretch reads YVIYMFVVHFIVPVTVIFFTYGRLVCTV. The Cytoplasmic portion of the chain corresponds to 234 to 255; it reads KSAAAAQQDSASTQKAEKEVTR. Residues 256-279 traverse the membrane as a helical segment; that stretch reads MVILMVVGFLVAWTPYATVAAWIF. At 280-287 the chain is on the extracellular side; it reads FNKGAAFT. A helical membrane pass occupies residues 288-312; the sequence is AQFMAVPAFFSKSSALFNPIIYVLL. An N6-(retinylidene)lysine modification is found at lysine 299. The Cytoplasmic segment spans residues 313–354; sequence NKQFRNCMLTTLFCGKNPLGDEESSTVSTKTEVSTVSSVSPA.

This sequence belongs to the G-protein coupled receptor 1 family. Opsin subfamily. In terms of tissue distribution, the color pigments are found in the cone photoreceptor cells.

The protein resides in the membrane. Visual pigments are the light-absorbing molecules that mediate vision. They consist of an apoprotein, opsin, covalently linked to cis-retinal. In Psalidodon fasciatus (Banded astyanax), this protein is Green-sensitive opsin-3 (RH11).